Here is a 489-residue protein sequence, read N- to C-terminus: Glycogen synthase (489 aa).

Arg20 serves as a coordination point for ADP-alpha-D-glucose.

Belongs to the glycosyltransferase 1 family. Bacterial/plant glycogen synthase subfamily.

The catalysed reaction is [(1-&gt;4)-alpha-D-glucosyl](n) + ADP-alpha-D-glucose = [(1-&gt;4)-alpha-D-glucosyl](n+1) + ADP + H(+). It participates in glycan biosynthesis; glycogen biosynthesis. In terms of biological role, synthesizes alpha-1,4-glucan chains using ADP-glucose. The chain is Glycogen synthase from Chlorobium phaeovibrioides (strain DSM 265 / 1930) (Prosthecochloris vibrioformis (strain DSM 265)).